A 523-amino-acid chain; its full sequence is Probable endopeptidase p60 (523 aa).

Positions 1–27 (MNMKKATIAATAGIAVTAFAAPTIASA) are cleaved as a signal peptide. A LysM 1 domain is found at 28–71 (STVVVEAGDTLWGIAQDNGTTVDALKKANKLTTDKIVPGQKLQV). One can recognise an SH3b domain in the interval 78–142 (KTEKSVSATW…VNGKYLGNAV (65 aa)). Residues 146–188 (PSATPEVKQEETTQAAPAQQTKTEVKQATPAATTEKDAVETKT) form a disordered region. Over residues 157–167 (TTQAAPAQQTK) the composition is skewed to low complexity. In terms of domain architecture, LysM 2 spans 198–241 (TTHTVKSGDTIWALSVKYGASVQDLMSWNNLSSSSIYVGQNIAV). Composition is skewed to low complexity over residues 251 to 282 (PKAE…TTTT) and 290 to 318 (EKQT…TNAS). Disordered regions lie at residues 251-323 (PKAE…YTVK) and 367-408 (ATNT…SSSA). A LysM 3 domain is found at 318–361 (SSYTVKSGDTLGKIASTFGTTVSKIKALNGLTSDNLQVGDVLKV). The 119-residue stretch at 405-523 (SSSASAIIAE…GQYLVGFGRV (119 aa)) folds into the NlpC/P60 domain. The Nucleophile role is filled by Cys-435. The active-site Proton acceptor is His-485. Asn-497 is a catalytic residue.

The protein belongs to the peptidase C40 family.

In terms of biological role, this major extracellular protein may be involved in the invasion of non-professional phagocytic cells by Listeria. This is Probable endopeptidase p60 (iap) from Listeria seeligeri.